Consider the following 460-residue polypeptide: Ribulose bisphosphate carboxylase (460 aa).

Asn-112 contributes to the substrate binding site. The Proton acceptor role is filled by Lys-167. Lys-169 contacts substrate. Mg(2+) contacts are provided by Lys-192, Asp-194, and Glu-195. Lys-192 carries the N6-carboxylysine modification. The active-site Proton acceptor is His-288. Residues Arg-289, His-322, and Ser-369 each coordinate substrate.

Belongs to the RuBisCO large chain family. Type II subfamily. Homodimer. The cofactor is Mg(2+).

It catalyses the reaction 2 (2R)-3-phosphoglycerate + 2 H(+) = D-ribulose 1,5-bisphosphate + CO2 + H2O. The catalysed reaction is D-ribulose 1,5-bisphosphate + O2 = 2-phosphoglycolate + (2R)-3-phosphoglycerate + 2 H(+). Functionally, ruBisCO catalyzes two reactions: the carboxylation of D-ribulose 1,5-bisphosphate, the primary event in carbon dioxide fixation, as well as the oxidative fragmentation of the pentose substrate. Both reactions occur simultaneously and in competition at the same active site. This Rhodopseudomonas palustris (strain BisA53) protein is Ribulose bisphosphate carboxylase.